The chain runs to 160 residues: Ribosomal RNA large subunit methyltransferase H (160 aa).

S-adenosyl-L-methionine is bound by residues Leu-76, Gly-108, and 127-132 (LGKMTW).

The protein belongs to the RNA methyltransferase RlmH family. In terms of assembly, homodimer.

The protein localises to the cytoplasm. It carries out the reaction pseudouridine(1915) in 23S rRNA + S-adenosyl-L-methionine = N(3)-methylpseudouridine(1915) in 23S rRNA + S-adenosyl-L-homocysteine + H(+). Functionally, specifically methylates the pseudouridine at position 1915 (m3Psi1915) in 23S rRNA. This is Ribosomal RNA large subunit methyltransferase H from Rhizobium rhizogenes (strain K84 / ATCC BAA-868) (Agrobacterium radiobacter).